The sequence spans 300 residues: MPKHFTRIRDLGFEGAWKVLERAKEMKDTGYRGRTLEGKVATLIFEKASTRTRISFEVAVRHLGGTTIFMTPAESQLGRSEPLRDTARVISRYTDCMIVRTFGQAKIDELASFGSIPVVNALTDEGHPCQVMSDVLTMYERTPDLSQVRVAWIGDGNNMANSWIEAAMYFPFELFMAFPEGYEPDRQLLGLALEAGAKIFLTRDPHMAIDGAHYVNTDVWASMGQEEEQKRREAAFKGFCIDGALMGRAHPDAKFMHCLPAHRGEEVTDEVMESPASIVWDQAENRLHMQKAILEWVFTE.

Residues 49-52 (STRT), Gln-76, Arg-100, and 127-130 (HPCQ) each bind carbamoyl phosphate. L-ornithine is bound by residues Asn-158, Asp-218, and 222–223 (SM). Residues 258–259 (CL) and Arg-286 contribute to the carbamoyl phosphate site.

Belongs to the aspartate/ornithine carbamoyltransferase superfamily. OTCase family.

The protein localises to the cytoplasm. The catalysed reaction is carbamoyl phosphate + L-ornithine = L-citrulline + phosphate + H(+). It participates in amino-acid biosynthesis; L-arginine biosynthesis; L-arginine from L-ornithine and carbamoyl phosphate: step 1/3. Functionally, reversibly catalyzes the transfer of the carbamoyl group from carbamoyl phosphate (CP) to the N(epsilon) atom of ornithine (ORN) to produce L-citrulline. This Nitratidesulfovibrio vulgaris (strain ATCC 29579 / DSM 644 / CCUG 34227 / NCIMB 8303 / VKM B-1760 / Hildenborough) (Desulfovibrio vulgaris) protein is Ornithine carbamoyltransferase.